A 197-amino-acid polypeptide reads, in one-letter code: Pyridoxal 5'-phosphate synthase subunit PdxT (197 aa).

53–55 provides a ligand contact to L-glutamine; sequence GES. Residue Cys-85 is the Nucleophile of the active site. L-glutamine is bound by residues Arg-114 and 142–143; that span reads IR. Active-site charge relay system residues include His-179 and Glu-181.

It belongs to the glutaminase PdxT/SNO family. In the presence of PdxS, forms a dodecamer of heterodimers. Only shows activity in the heterodimer.

It carries out the reaction aldehydo-D-ribose 5-phosphate + D-glyceraldehyde 3-phosphate + L-glutamine = pyridoxal 5'-phosphate + L-glutamate + phosphate + 3 H2O + H(+). The catalysed reaction is L-glutamine + H2O = L-glutamate + NH4(+). The protein operates within cofactor biosynthesis; pyridoxal 5'-phosphate biosynthesis. In terms of biological role, catalyzes the hydrolysis of glutamine to glutamate and ammonia as part of the biosynthesis of pyridoxal 5'-phosphate. The resulting ammonia molecule is channeled to the active site of PdxS. The protein is Pyridoxal 5'-phosphate synthase subunit PdxT of Thermococcus gammatolerans (strain DSM 15229 / JCM 11827 / EJ3).